A 111-amino-acid polypeptide reads, in one-letter code: Ig kappa chain V-III region PC 7940 (111 aa).

The framework-1 stretch occupies residues 1 to 23; it reads DIVLTQSPASLAVSLGQRATISC. C23 and C92 are joined by a disulfide. Residues 24-38 form a complementarity-determining-1 region; it reads RASKSVSAFGYSYMH. The framework-2 stretch occupies residues 39-53; that stretch reads WYQQKPGQPPKLLIY. Positions 54 to 60 are complementarity-determining-2; the sequence is LASNLES. Residues 61–92 are framework-3; sequence GVPARFSGSGSGTDFTLNIHPVEEEDAVTYYC. Positions 93–101 are complementarity-determining-3; it reads QHSRELPPT. A framework-4 region spans residues 102–111; sequence FGGGTKLEIK.

The polypeptide is Ig kappa chain V-III region PC 7940 (Mus musculus (Mouse)).